A 1262-amino-acid polypeptide reads, in one-letter code: Structural maintenance of chromosomes protein 1 (1262 aa).

A coiled-coil region spans residues 171 to 497 (SRSHEFQAEY…VAVVRQLSEA (327 aa)). The SMC hinge domain occupies 524-642 (SVYGRLVDLC…ESQEDAKQLA (119 aa)). Residues 680 to 937 (KKWDEKVVKQ…RLESLLTKKQ (258 aa)) are a coiled coil. Positions 965–994 (EYEEDDGDDTASQSSQSATDGPSVSEEQIQ) are disordered. The segment covering 974 to 991 (TASQSSQSATDGPSVSEE) has biased composition (polar residues). The stretch at 1017 to 1086 (DGVRQMSNRL…QQFEKVKTDR (70 aa)) forms a coiled coil. A DA-box motif is present at residues 1148 to 1183 (LSGGEKTIAALALLFAVHGRNPAPFFVLDEIDAALD).

This sequence belongs to the SMC family. SMC1 subfamily. Component of the cohesin complex, composed of the smc-1 and smc-3 heterodimer attached via their SMC hinge domain, scc-1 which links them, and scc-3. Interacts with smc-3, scc-1, scc-3 and tim-1.

Its subcellular location is the nucleus. The protein localises to the chromosome. Involved in chromosome cohesion during cell cycle and in DNA repair. Required for chromosome segregation during mitosis. Central component of cohesin complex. The cohesin complex is required for the cohesion of sister chromatids after DNA replication. The cohesin complex apparently forms a large proteinaceous ring within which sister chromatids can be trapped. At anaphase, the complex is cleaved and dissociates from chromatin, allowing sister chromatids to segregate. In Caenorhabditis elegans, this protein is Structural maintenance of chromosomes protein 1.